We begin with the raw amino-acid sequence, 297 residues long: Large ribosomal subunit protein uL18 (297 aa).

An N-acetylglycine modification is found at glycine 2. N6-acetyllysine is present on residues lysine 5 and lysine 48. Serine 185 is subject to Phosphoserine. Lysine 220 is modified (N6-acetyllysine; alternate). Residue lysine 220 forms a Glycyl lysine isopeptide (Lys-Gly) (interchain with G-Cter in SUMO1); alternate linkage. Lysine 220 is covalently cross-linked (Glycyl lysine isopeptide (Lys-Gly) (interchain with G-Cter in SUMO2); alternate). Threonine 232 is subject to Phosphothreonine. Positions 253–297 (YEKKPKKEVKKKRWNRPKMSLAQKKDRVAQKKASFLRAQERAAES) are disordered. Basic residues predominate over residues 258–268 (KKEVKKKRWNR). The residue at position 272 (serine 272) is a Phosphoserine.

This sequence belongs to the universal ribosomal protein uL18 family. Component of the large ribosomal subunit (LSU). Part of the 5S RNP complex, which is a LSU subcomplex composed of the 5S RNA, RPL5 and RPL11. Component of a hexameric 5S RNP precursor complex, composed of 5S RNA, RRS1, RPF2/BXDC1, RPL5, RPL11 and HEATR3; this complex acts as a precursor for ribosome assembly. Interacts with NVL in an ATP-dependent manner. Interacts with RRP1B. Interacts with IPO5, IPO7 and KPNB1; these interactions may be involved in RPL5 nuclear import for the assembly of ribosomal subunits. Interacts with RRP1B.

It localises to the cytoplasm. The protein localises to the nucleus. It is found in the nucleolus. Component of the ribosome, a large ribonucleoprotein complex responsible for the synthesis of proteins in the cell. The small ribosomal subunit (SSU) binds messenger RNAs (mRNAs) and translates the encoded message by selecting cognate aminoacyl-transfer RNA (tRNA) molecules. The large subunit (LSU) contains the ribosomal catalytic site termed the peptidyl transferase center (PTC), which catalyzes the formation of peptide bonds, thereby polymerizing the amino acids delivered by tRNAs into a polypeptide chain. The nascent polypeptides leave the ribosome through a tunnel in the LSU and interact with protein factors that function in enzymatic processing, targeting, and the membrane insertion of nascent chains at the exit of the ribosomal tunnel. As part of the 5S RNP/5S ribonucleoprotein particle it is an essential component of the LSU, required for its formation and the maturation of rRNAs. It also couples ribosome biogenesis to p53/TP53 activation. As part of the 5S RNP it accumulates in the nucleoplasm and inhibits MDM2, when ribosome biogenesis is perturbed, mediating the stabilization and the activation of TP53. The polypeptide is Large ribosomal subunit protein uL18 (RPL5) (Macaca fascicularis (Crab-eating macaque)).